A 494-amino-acid chain; its full sequence is MLNDKQSVENIPRILISADRSSSGKTTISMGLMAALVSRGYKVQPFKVALDYIDPSYHTEITGRFCRNLDGYLMDENGILDVYTHACEAGEKADIAIIEGVRGLYEGFESLSDLGSTAQIAKILNCPVIFVINARSITRSSAALINGYRNFDPDVEIAGVILNNIGSRRHAKKAKEAIEYYTGVPVIGIVPRDPAMQISMRHLGLMPALEGRRRLGDGGFEARLRGIEEIINKGIDVDRFMEIAKSAKALKSPENSVFSSVSDPGAPRPKIGVALDEAFNFYYRDNIDLLNLAGAEIVYFSPVKDASLPEVDGLYIGGGYPELFAAELEANESMRQDIKKASAAGMPIYAECGGLMYLTEKISTGVPGKGTYHDASMPESTYSMVGALPGHTIMGQTRVVSYNIGTLNKDCLLGKKYNSFKGHEFHHSEIREIPEDAEFAITLSRGTGIKNGMDGLISGNTLGSYAHLHGVAYREFASSLVEAARNFRDSRVLP.

The 206-residue stretch at 270-475 folds into the GATase cobBQ-type domain; sequence KIGVALDEAF…AHLHGVAYRE (206 aa). C352 functions as the Nucleophile in the catalytic mechanism.

The protein belongs to the CobB/CbiA family. Mg(2+) serves as cofactor.

It catalyses the reaction cob(II)yrinate + 2 L-glutamine + 2 ATP + 2 H2O = cob(II)yrinate a,c diamide + 2 L-glutamate + 2 ADP + 2 phosphate + 2 H(+). The catalysed reaction is Ni-sirohydrochlorin + 2 L-glutamine + 2 ATP + 2 H2O = Ni-sirohydrochlorin a,c-diamide + 2 L-glutamate + 2 ADP + 2 phosphate + 2 H(+). The protein operates within cofactor biosynthesis; adenosylcobalamin biosynthesis; cob(II)yrinate a,c-diamide from sirohydrochlorin (anaerobic route): step 10/10. Catalyzes the ATP-dependent amidation of the two carboxylate groups at positions a and c of cobyrinate, using either L-glutamine or ammonia as the nitrogen source (Potential). Involved in the biosynthesis of the unique nickel-containing tetrapyrrole coenzyme F430, the prosthetic group of methyl-coenzyme M reductase (MCR), which plays a key role in methanogenesis and anaerobic methane oxidation. Catalyzes the ATP-dependent amidation of the two carboxylate groups at positions a and c of Ni-sirohydrochlorin, using L-glutamine or ammonia as the nitrogen source. Also able to use sirohydrochlorin as substrate, but only produces a monoamide species in a much slower reaction. Unable to use other metallosirohydrochlorins such as sirohaem and Co-sirohydrochlorin. The polypeptide is Cobyrinate a,c-diamide synthase (Methanosarcina barkeri (strain Fusaro / DSM 804)).